Here is a 152-residue protein sequence, read N- to C-terminus: Large ribosomal subunit protein bL34c (152 aa).

The transit peptide at 1–91 directs the protein to the chloroplast; sequence MATLSLLSTG…DRCRRFVVRA (91 aa).

In terms of assembly, component of the chloroplast large ribosomal subunit (LSU). Mature 70S chloroplast ribosomes of higher plants consist of a small (30S) and a large (50S) subunit. The 30S small subunit contains 1 molecule of ribosomal RNA (16S rRNA) and 24 different proteins. The 50S large subunit contains 3 rRNA molecules (23S, 5S and 4.5S rRNA) and 33 different proteins.

Its subcellular location is the plastid. The protein resides in the chloroplast. Functionally, component of the chloroplast ribosome (chloro-ribosome), a dedicated translation machinery responsible for the synthesis of chloroplast genome-encoded proteins, including proteins of the transcription and translation machinery and components of the photosynthetic apparatus. The chain is Large ribosomal subunit protein bL34c (RPL34) from Spinacia oleracea (Spinach).